The following is a 154-amino-acid chain: Egg-lysin (154 aa).

Residues 1–18 (MKLLVLCIFAMMATLAMS) form the signal peptide.

In terms of assembly, homodimer. In terms of tissue distribution, sperm.

In terms of biological role, dissolves the egg vitelline layer nonenzymatically during fertilization. It creates a hole of about 3 mu-m in diameter through which the sperm pass. The protein is Egg-lysin of Haliotis sorenseni (White abalone).